We begin with the raw amino-acid sequence, 95 residues long: Leukocyte-specific transcript 1 protein (95 aa).

Residues 22-42 (LGLGGLLLLLVIILFICLCGF) traverse the membrane as a helical segment. Serine 64 is subject to Phosphoserine.

It belongs to the LST1 family. As to expression, expressed in spleen and at lower levels in thymus and liver.

Its subcellular location is the membrane. Functionally, possible role in modulating immune responses. Has an inhibitory effect on lymphocyte proliferation. Induces morphological changes including production of filopodia and microspikes when overexpressed in a variety of cell types and may be involved in dendritic cell maturation. This is Leukocyte-specific transcript 1 protein (Lst1) from Mus musculus (Mouse).